The chain runs to 493 residues: Cysteine--tRNA ligase (493 aa).

C31 contributes to the Zn(2+) binding site. Residues P33–H43 carry the 'HIGH' region motif. Residues C226, H251, and E255 each coordinate Zn(2+). A 'KMSKS' region motif is present at residues K283 to S287. K286 contributes to the ATP binding site.

Belongs to the class-I aminoacyl-tRNA synthetase family. In terms of assembly, monomer. It depends on Zn(2+) as a cofactor.

The protein resides in the cytoplasm. It carries out the reaction tRNA(Cys) + L-cysteine + ATP = L-cysteinyl-tRNA(Cys) + AMP + diphosphate. This Bacteroides thetaiotaomicron (strain ATCC 29148 / DSM 2079 / JCM 5827 / CCUG 10774 / NCTC 10582 / VPI-5482 / E50) protein is Cysteine--tRNA ligase.